The primary structure comprises 116 residues: Putative membrane protein (116 aa).

Residues 13–33 form a helical membrane-spanning segment; the sequence is VISIITFILVIAIFVIEIVSC.

The protein localises to the host membrane. The chain is Putative membrane protein from Alethinophid 1 reptarenavirus (isolate AlRrV1/Boa/USA/BC/2009) (Golden Gate virus).